The chain runs to 625 residues: Interferon-induced GTP-binding protein MxE (625 aa).

The region spanning 40 to 313 is the Dynamin-type G domain; the sequence is DLNLPAIAVI…LVEHIAKNLP (274 aa). Residues 50–57 are G1 motif; it reads GDQSSGKS. 50–57 is a GTP binding site; that stretch reads GDQSSGKS. The segment at 75-77 is G2 motif; it reads VTR. Residues 151–154 form a G3 motif region; sequence DLPG. Residues 151–155 and 220–223 each bind GTP; these read DLPGI and TKPD. Residues 220-223 are G4 motif; it reads TKPD. A G5 motif region spans residues 252-255; it reads KCRG. The region spanning 536–625 is the GED domain; the sequence is VREMAYHLTS…RVLSKFVHSA (90 aa).

The protein belongs to the TRAFAC class dynamin-like GTPase superfamily. Dynamin/Fzo/YdjA family.

It localises to the cytoplasm. The chain is Interferon-induced GTP-binding protein MxE (mxe) from Danio rerio (Zebrafish).